Reading from the N-terminus, the 158-residue chain is NAD(P)H-quinone oxidoreductase subunit N (158 aa).

This sequence belongs to the complex I NdhN subunit family. NDH-1 can be composed of about 15 different subunits; different subcomplexes with different compositions have been identified which probably have different functions.

The protein resides in the cellular thylakoid membrane. The catalysed reaction is a plastoquinone + NADH + (n+1) H(+)(in) = a plastoquinol + NAD(+) + n H(+)(out). It catalyses the reaction a plastoquinone + NADPH + (n+1) H(+)(in) = a plastoquinol + NADP(+) + n H(+)(out). In terms of biological role, NDH-1 shuttles electrons from an unknown electron donor, via FMN and iron-sulfur (Fe-S) centers, to quinones in the respiratory and/or the photosynthetic chain. The immediate electron acceptor for the enzyme in this species is believed to be plastoquinone. Couples the redox reaction to proton translocation, and thus conserves the redox energy in a proton gradient. Cyanobacterial NDH-1 also plays a role in inorganic carbon-concentration. The sequence is that of NAD(P)H-quinone oxidoreductase subunit N from Prochlorococcus marinus (strain MIT 9215).